The chain runs to 450 residues: Tubulin beta-2 chain (450 aa).

GTP-binding residues include Q11, E69, S138, G142, T143, G144, N204, and N226. Residue E69 participates in Mg(2+) binding. Residues 428–450 (ATAEDDVDGYAEGEAGETYESEQ) form a disordered region. A compositionally biased stretch (acidic residues) spans 429–450 (TAEDDVDGYAEGEAGETYESEQ).

This sequence belongs to the tubulin family. As to quaternary structure, dimer of alpha and beta chains. A typical microtubule is a hollow water-filled tube with an outer diameter of 25 nm and an inner diameter of 15 nm. Alpha-beta heterodimers associate head-to-tail to form protofilaments running lengthwise along the microtubule wall with the beta-tubulin subunit facing the microtubule plus end conferring a structural polarity. Microtubules usually have 13 protofilaments but different protofilament numbers can be found in some organisms and specialized cells. Requires Mg(2+) as cofactor. Cleaved by caspase ced-3 in vitro.

It localises to the cytoplasm. The protein localises to the cytoskeleton. Tubulin is the major constituent of microtubules, a cylinder consisting of laterally associated linear protofilaments composed of alpha- and beta-tubulin heterodimers. Microtubules grow by the addition of GTP-tubulin dimers to the microtubule end, where a stabilizing cap forms. Below the cap, tubulin dimers are in GDP-bound state, owing to GTPase activity of alpha-tubulin. Required for the normal dynamic behavior of the non-centrosomal microtubules in the epidermal syncytium. Involved in the redistribution of microtubule end-binding protein EB1/ebp-2 caused by wounding. Required to modulate expression in the epidermis of antimicrobial peptides, such as nlp-29, after wounding, or fungal infection. The protein is Tubulin beta-2 chain (tbb-2) of Caenorhabditis elegans.